Consider the following 465-residue polypeptide: UDP-N-acetylmuramate--L-alanine ligase (465 aa).

Residue Gly114–Thr120 participates in ATP binding.

The protein belongs to the MurCDEF family.

It localises to the cytoplasm. The enzyme catalyses UDP-N-acetyl-alpha-D-muramate + L-alanine + ATP = UDP-N-acetyl-alpha-D-muramoyl-L-alanine + ADP + phosphate + H(+). Its pathway is cell wall biogenesis; peptidoglycan biosynthesis. Cell wall formation. This Chlorobium phaeobacteroides (strain BS1) protein is UDP-N-acetylmuramate--L-alanine ligase.